We begin with the raw amino-acid sequence, 277 residues long: Leucine-rich repeat-containing protein 10 (277 aa).

LRR repeat units follow at residues 53–74 (ELVK…LGQL), 76–97 (NLQI…VCTL), 99–120 (QLCI…LSLL), 122–143 (NLRT…VCEL), 145–167 (LLKT…RRLQ), 168–189 (ELRT…LLHM), and 191–212 (FLEV…AHLS).

Its subcellular location is the nucleus. Functionally, may play important roles in cardiac development and/or cardiac function. The sequence is that of Leucine-rich repeat-containing protein 10 (LRRC10) from Homo sapiens (Human).